A 109-amino-acid chain; its full sequence is Large ribosomal subunit protein eL30 (109 aa).

It belongs to the eukaryotic ribosomal protein eL30 family.

The chain is Large ribosomal subunit protein eL30 (RPL30) from Yarrowia lipolytica (strain CLIB 122 / E 150) (Yeast).